A 152-amino-acid chain; its full sequence is uncharacterized protein (152 aa).

This is an uncharacterized protein from Rickettsia prowazekii (strain Madrid E).